The following is a 218-amino-acid chain: Large ribosomal subunit protein uL4 (218 aa).

The tract at residues 55-83 (THATKTRGMVSGGGKKPWKQKGTGRARQG) is disordered.

The protein belongs to the universal ribosomal protein uL4 family. Part of the 50S ribosomal subunit.

One of the primary rRNA binding proteins, this protein initially binds near the 5'-end of the 23S rRNA. It is important during the early stages of 50S assembly. It makes multiple contacts with different domains of the 23S rRNA in the assembled 50S subunit and ribosome. Its function is as follows. Forms part of the polypeptide exit tunnel. This chain is Large ribosomal subunit protein uL4, found in Bifidobacterium longum (strain DJO10A).